We begin with the raw amino-acid sequence, 138 residues long: Large ribosomal subunit protein uL16 (138 aa).

Over residues M1–Q13 the composition is skewed to basic residues. A disordered region spans residues M1–T22.

This sequence belongs to the universal ribosomal protein uL16 family. Part of the 50S ribosomal subunit.

Binds 23S rRNA and is also seen to make contacts with the A and possibly P site tRNAs. In Methylibium petroleiphilum (strain ATCC BAA-1232 / LMG 22953 / PM1), this protein is Large ribosomal subunit protein uL16.